The primary structure comprises 432 residues: Enolase (432 aa).

Glutamine 163 contacts (2R)-2-phosphoglycerate. Catalysis depends on glutamate 205, which acts as the Proton donor. Mg(2+) is bound by residues aspartate 242, glutamate 287, and aspartate 314. Residues lysine 339, arginine 368, serine 369, and lysine 390 each coordinate (2R)-2-phosphoglycerate. Residue lysine 339 is the Proton acceptor of the active site.

It belongs to the enolase family. Mg(2+) serves as cofactor.

The protein localises to the cytoplasm. It is found in the secreted. Its subcellular location is the cell surface. The enzyme catalyses (2R)-2-phosphoglycerate = phosphoenolpyruvate + H2O. The protein operates within carbohydrate degradation; glycolysis; pyruvate from D-glyceraldehyde 3-phosphate: step 4/5. Catalyzes the reversible conversion of 2-phosphoglycerate (2-PG) into phosphoenolpyruvate (PEP). It is essential for the degradation of carbohydrates via glycolysis. The chain is Enolase from Myxococcus xanthus (strain DK1622).